The following is a 452-amino-acid chain: Minor capsid protein (452 aa).

Basic and acidic residues-rich tracts occupy residues 219-236 (VDKPEDKPKPVFDDKGKQ) and 247-258 (GKPDISKPGEKQ). Residues 219–258 (VDKPEDKPKPVFDDKGKQPTDTVPPVDNGKPDISKPGEKQ) are disordered.

Belongs to the closteroviridae minor capsid protein family.

The protein resides in the virion. Its function is as follows. Minor capsid protein that encapsidates the 5'-terminal portion of the viral genome. This chain is Minor capsid protein, found in Lettuce infectious yellows virus (isolate United States/92) (LIYV).